The primary structure comprises 285 residues: Phosphatidylserine decarboxylase proenzyme (285 aa).

Catalysis depends on charge relay system; for autoendoproteolytic cleavage activity residues Asp96, His152, and Ser250. Ser250 (schiff-base intermediate with substrate; via pyruvic acid; for decarboxylase activity) is an active-site residue. At Ser250 the chain carries Pyruvic acid (Ser); by autocatalysis.

Belongs to the phosphatidylserine decarboxylase family. PSD-B subfamily. Prokaryotic type I sub-subfamily. Heterodimer of a large membrane-associated beta subunit and a small pyruvoyl-containing alpha subunit. Requires pyruvate as cofactor. Is synthesized initially as an inactive proenzyme. Formation of the active enzyme involves a self-maturation process in which the active site pyruvoyl group is generated from an internal serine residue via an autocatalytic post-translational modification. Two non-identical subunits are generated from the proenzyme in this reaction, and the pyruvate is formed at the N-terminus of the alpha chain, which is derived from the carboxyl end of the proenzyme. The autoendoproteolytic cleavage occurs by a canonical serine protease mechanism, in which the side chain hydroxyl group of the serine supplies its oxygen atom to form the C-terminus of the beta chain, while the remainder of the serine residue undergoes an oxidative deamination to produce ammonia and the pyruvoyl prosthetic group on the alpha chain. During this reaction, the Ser that is part of the protease active site of the proenzyme becomes the pyruvoyl prosthetic group, which constitutes an essential element of the active site of the mature decarboxylase.

It localises to the cell membrane. It catalyses the reaction a 1,2-diacyl-sn-glycero-3-phospho-L-serine + H(+) = a 1,2-diacyl-sn-glycero-3-phosphoethanolamine + CO2. It functions in the pathway phospholipid metabolism; phosphatidylethanolamine biosynthesis; phosphatidylethanolamine from CDP-diacylglycerol: step 2/2. Functionally, catalyzes the formation of phosphatidylethanolamine (PtdEtn) from phosphatidylserine (PtdSer). The protein is Phosphatidylserine decarboxylase proenzyme of Acinetobacter baylyi (strain ATCC 33305 / BD413 / ADP1).